We begin with the raw amino-acid sequence, 170 residues long: Small ribosomal subunit protein bS18c (170 aa).

The disordered stretch occupies residues 1–61 (MYTSKQPFLK…RRPRIGPGDR (61 aa)). A compositionally biased stretch (polar residues) spans 13–26 (QPFSKSKQTFNKSK). The segment covering 27 to 55 (QPFRKSKQTFRKFKQPFRKSKQPFRRRPR) has biased composition (basic residues).

It belongs to the bacterial ribosomal protein bS18 family. In terms of assembly, part of the 30S ribosomal subunit.

Its subcellular location is the plastid. It is found in the chloroplast. This is Small ribosomal subunit protein bS18c from Hordeum vulgare (Barley).